Here is a 208-residue protein sequence, read N- to C-terminus: N-(5'-phosphoribosyl)anthranilate isomerase (208 aa).

The protein belongs to the TrpF family.

The enzyme catalyses N-(5-phospho-beta-D-ribosyl)anthranilate = 1-(2-carboxyphenylamino)-1-deoxy-D-ribulose 5-phosphate. The protein operates within amino-acid biosynthesis; L-tryptophan biosynthesis; L-tryptophan from chorismate: step 3/5. This chain is N-(5'-phosphoribosyl)anthranilate isomerase, found in Dechloromonas aromatica (strain RCB).